Reading from the N-terminus, the 117-residue chain is UPF0102 protein Clos_1471 (117 aa).

This sequence belongs to the UPF0102 family.

The sequence is that of UPF0102 protein Clos_1471 from Alkaliphilus oremlandii (strain OhILAs) (Clostridium oremlandii (strain OhILAs)).